The chain runs to 32 residues: uncharacterized protein (32 aa).

This is an uncharacterized protein from Enterobacteria phage T4 (Bacteriophage T4).